A 163-amino-acid chain; its full sequence is MVEGEASSPAFTIDYAVATGDWPAEDVLRGLVERAVTAAAARTDGPLQASLSVLFTDDAEMRALNARFRGKDKPTNVLSFPAPDSMVPPGTPRHFGDIALGYETVSREAKEEGKSFEHHLTHLVVHGFLHLAGHDHETEVEAEEMEQLEREILQSLAIGDPYA.

3 residues coordinate Zn(2+): histidine 126, histidine 130, and histidine 136.

Belongs to the endoribonuclease YbeY family. Zn(2+) serves as cofactor.

Its subcellular location is the cytoplasm. Its function is as follows. Single strand-specific metallo-endoribonuclease involved in late-stage 70S ribosome quality control and in maturation of the 3' terminus of the 16S rRNA. This chain is Endoribonuclease YbeY, found in Chelativorans sp. (strain BNC1).